Here is a 501-residue protein sequence, read N- to C-terminus: Glucose-6-phosphate exchanger SLC37A2 (501 aa).

The chain crosses the membrane as a helical span at residues 19–39 (SWFRGLILLLTFLIYACYHMS). Asparagine 53, asparagine 62, and asparagine 68 each carry an N-linked (GlcNAc...) asparagine glycan. 5 helical membrane passes run 88–108 (GGVDNAFLIAYAIGMFISGVF), 118–138 (LSAGMLLSGLFTSLFGLGYFW), 145–165 (YFVVIQVCNGLVQTTGWPSVV), 189–209 (SVGNILGSLIAGIWVNGQWGL), and 210–230 (SFIVPGIITAVMGVITFLFLI). Residues 240–262 (PPQHHGEPAENQDNPEDPGNSPC) are disordered. 6 helical membrane-spanning segments follow: residues 302-322 (LCLLFAKLVSYTFLYWLPLYI), 334-354 (GDLSTLFDVGGIIGGIVAGLV), 362-382 (ATTCCVMLILAAPMMFLYNYI), 391-411 (IVMLIICGGLVNGPYALITTA), 434-454 (AIIDGTGSIGAALGPLLAGLI), and 462-482 (VFYMLISADVLACLLLCRLVY).

Belongs to the major facilitator superfamily. Organophosphate:Pi antiporter (OPA) (TC 2.A.1.4) family. Detected in intestine and pancreas. Lower expression is also detected in liver and kidney.

It is found in the endoplasmic reticulum membrane. It carries out the reaction D-glucose 6-phosphate(in) + phosphate(out) = D-glucose 6-phosphate(out) + phosphate(in). Its activity is regulated as follows. Inhibited by vanadate but not by chlorogenic acid. Inorganic phosphate and glucose-6-phosphate antiporter. May transport cytoplasmic glucose-6-phosphate into the lumen of the endoplasmic reticulum and translocate inorganic phosphate into the opposite direction. Independent of a lumenal glucose-6-phosphatase. May not play a role in homeostatic regulation of blood glucose levels. The sequence is that of Glucose-6-phosphate exchanger SLC37A2 from Homo sapiens (Human).